A 70-amino-acid chain; its full sequence is Conotoxin TxMMSK-02 (70 aa).

The first 20 residues, 1 to 20, serve as a signal peptide directing secretion; that stretch reads MMSKLGALLTICLLLFSLTA. A propeptide spanning residues 21–53 is cleaved from the precursor; that stretch reads VPLDGDQHADQPAQRLQDRIPTEDHPLFDPNKR. Cystine bridges form between C54–C68, C55–C64, and C60–C67. P66 carries the 4-hydroxyproline modification. Y69 carries the tyrosine amide modification.

This sequence belongs to the conotoxin M superfamily. As to expression, expressed by the venom duct.

Its subcellular location is the secreted. In Conus textile (Cloth-of-gold cone), this protein is Conotoxin TxMMSK-02.